The sequence spans 193 residues: Ribonuclease HII (193 aa).

The RNase H type-2 domain maps to 15–193 (YIVAGIDEAG…PYHRRSFKCC (179 aa)). A divalent metal cation-binding residues include D21, E22, and D112.

It belongs to the RNase HII family. The cofactor is Mn(2+). It depends on Mg(2+) as a cofactor.

It localises to the cytoplasm. The catalysed reaction is Endonucleolytic cleavage to 5'-phosphomonoester.. Functionally, endonuclease that specifically degrades the RNA of RNA-DNA hybrids. The chain is Ribonuclease HII from Rickettsia felis (strain ATCC VR-1525 / URRWXCal2) (Rickettsia azadi).